The chain runs to 216 residues: Guanylate kinase (216 aa).

Residues 15 to 193 enclose the Guanylate kinase-like domain; sequence GNLFMVVAPS…ALEELRNVVR (179 aa). 22 to 29 is a binding site for ATP; it reads APSGAGKS.

It belongs to the guanylate kinase family.

It localises to the cytoplasm. It catalyses the reaction GMP + ATP = GDP + ADP. Essential for recycling GMP and indirectly, cGMP. The protein is Guanylate kinase of Cupriavidus pinatubonensis (strain JMP 134 / LMG 1197) (Cupriavidus necator (strain JMP 134)).